Reading from the N-terminus, the 301-residue chain is Heterogeneous nuclear ribonucleoprotein D-like (301 aa).

Residues 1 to 29 (MEDATEMSGGAEEFAEGSKINASKNQQDD) are disordered. RRM domains follow at residues 30–112 (GKMF…KGKE) and 115–194 (KKVF…QPKE). 2 disordered regions span residues 194-230 (EVYR…NWNQ) and 269-301 (GYGP…YQPY). A compositionally biased stretch (gly residues) spans 212-224 (GGRGGGRGRGRGQ).

It is found in the nucleus. The protein localises to the cytoplasm. In terms of biological role, acts as a transcriptional regulator. Binds DNA and RNA. The polypeptide is Heterogeneous nuclear ribonucleoprotein D-like (HNRNPDL) (Gallus gallus (Chicken)).